The following is a 341-amino-acid chain: DNA-directed RNA polymerase subunit alpha (341 aa).

An alpha N-terminal domain (alpha-NTD) region spans residues 1–237 (MLSLSKNWNA…EQLQLFISFE (237 aa)). The alpha C-terminal domain (alpha-CTD) stretch occupies residues 252 to 341 (FSPYLLKRVD…LSKRYEDSYN (90 aa)).

This sequence belongs to the RNA polymerase alpha chain family. Homodimer. The RNAP catalytic core consists of 2 alpha, 1 beta, 1 beta' and 1 omega subunit. When a sigma factor is associated with the core the holoenzyme is formed, which can initiate transcription.

It catalyses the reaction RNA(n) + a ribonucleoside 5'-triphosphate = RNA(n+1) + diphosphate. Functionally, DNA-dependent RNA polymerase catalyzes the transcription of DNA into RNA using the four ribonucleoside triphosphates as substrates. The sequence is that of DNA-directed RNA polymerase subunit alpha from Rickettsia bellii (strain OSU 85-389).